A 186-amino-acid chain; its full sequence is Ribosome-recycling factor (186 aa).

Belongs to the RRF family.

It is found in the cytoplasm. In terms of biological role, responsible for the release of ribosomes from messenger RNA at the termination of protein biosynthesis. May increase the efficiency of translation by recycling ribosomes from one round of translation to another. The chain is Ribosome-recycling factor from Nitratiruptor sp. (strain SB155-2).